Consider the following 420-residue polypeptide: PHO85 cyclin-6 (420 aa).

3 disordered regions span residues 1 to 82, 134 to 155, and 268 to 321; these read MSIK…ESSF, QGTH…DTSN, and VTTT…GVQR. Residues 7 to 22 show a composition bias toward low complexity; the sequence is SPSSTNASSSPKSTYS. Residue S61 is modified to Phosphoserine. The segment covering 134–143 has biased composition (polar residues); sequence QGTHTVQSST. Over residues 277-296 the composition is skewed to basic and acidic residues; the sequence is AKHESPSNESSLDKANRGAD. Residues S281 and S312 each carry the phosphoserine modification. The segment covering 307–316 has biased composition (acidic residues); it reads NENDDSDDEN. The residue at position 317 (T317) is a Phosphothreonine.

It belongs to the cyclin family. PHO80 subfamily. Forms a cyclin-CDK complex with PHO85. Interacts with the substrate protein YJL084C. Interacts with elongin-C, which stabilizes PCL6. Interacts with the CDK inhibitor (CKI) PHO81.

It localises to the cytoplasm. It is found in the nucleus. Cyclin partner of the cyclin-dependent kinase (CDK) PHO85. Together with cyclin PCL7, controls glycogen phosphorylase and glycogen synthase activities in response to nutrient availablility. The PCL6-PHO85 cyclin-CDK holoenzyme has GLC8 kinase activity and phosphorylates and inactivates the phosphatase PP1-2 inhibitor GLC8, causing activation of PP1-2, which then dephosphorylates and activates glycogen phosphorylase. PCL6-PHO85 also phosphorylates YJL084C. The sequence is that of PHO85 cyclin-6 (PCL6) from Saccharomyces cerevisiae (strain ATCC 204508 / S288c) (Baker's yeast).